The chain runs to 359 residues: Histidinol-phosphate aminotransferase (359 aa).

Lys-217 carries the post-translational modification N6-(pyridoxal phosphate)lysine.

It belongs to the class-II pyridoxal-phosphate-dependent aminotransferase family. Histidinol-phosphate aminotransferase subfamily. Homodimer. The cofactor is pyridoxal 5'-phosphate.

The catalysed reaction is L-histidinol phosphate + 2-oxoglutarate = 3-(imidazol-4-yl)-2-oxopropyl phosphate + L-glutamate. It functions in the pathway amino-acid biosynthesis; L-histidine biosynthesis; L-histidine from 5-phospho-alpha-D-ribose 1-diphosphate: step 7/9. This chain is Histidinol-phosphate aminotransferase (hisC), found in Salmonella typhimurium (strain LT2 / SGSC1412 / ATCC 700720).